We begin with the raw amino-acid sequence, 118 residues long: Protein TusC (118 aa).

This sequence belongs to the DsrF/TusC family. As to quaternary structure, heterohexamer, formed by a dimer of trimers. The hexameric TusBCD complex contains 2 copies each of TusB, TusC and TusD. The TusBCD complex interacts with TusE.

It localises to the cytoplasm. Its function is as follows. Part of a sulfur-relay system required for 2-thiolation of 5-methylaminomethyl-2-thiouridine (mnm(5)s(2)U) at tRNA wobble positions. This chain is Protein TusC, found in Salmonella typhi.